A 372-amino-acid chain; its full sequence is Ciliary neurotrophic factor receptor subunit alpha (372 aa).

The N-terminal stretch at 1–22 is a signal peptide; the sequence is MAAPVPWACCAVLAAAAAVVYA. The region spanning 27–104 is the Ig-like C2-type domain; the sequence is PQEAPHVQYE…WHLRHQVLLH (78 aa). An intrachain disulfide couples Cys46 to Cys89. N-linked (GlcNAc...) asparagine glycans are attached at residues Asn60, Asn70, Asn142, and Asn190. Fibronectin type-III domains are found at residues 108–205 and 206–306; these read PPRE…VKPD and PPEN…TEEP. The WSXWS motif signature appears at 290-294; sequence WSDWS. Residues 301–340 form a disordered region; it reads PWTEEPRHLTTEAQAPETTTSTTSSLAPPPTTKICDPGEL. The segment covering 311-326 has biased composition (low complexity); sequence TEAQAPETTTSTTSSL. Ser342 carries GPI-anchor amidated serine lipidation. Residues 343-372 constitute a propeptide, removed in mature form; sequence GGGPSAPFLIHVPVTLALAAAAATANSLLI.

This sequence belongs to the type I cytokine receptor family. Type 3 subfamily. In terms of assembly, forms a heterotrimer with LIFR and IL6ST. Interacts with heterodimeric neurotropic cytokine composed of CLCF1/CLC and CRLF1/CLF-1. Either alone or in complex with the heterodimer CLCF1-CRLF1 interacts with SORL1; this interaction may promote internalization and lysosomal degradation. As to expression, expressed in retina, brain, spleen, lung, liver and kidney. In the retina it is highly expressed by photoreceptors, but also found in the RPE, inner nuclear layer and ganglion cells.

It localises to the cell membrane. Its function is as follows. Binds to CNTF. The alpha subunit provides the receptor specificity. The sequence is that of Ciliary neurotrophic factor receptor subunit alpha (CNTFR) from Canis lupus familiaris (Dog).